The chain runs to 196 residues: uncharacterized protein (196 aa).

The protein localises to the mitochondrion. This is an uncharacterized protein from Paramecium tetraurelia.